The chain runs to 340 residues: NAD-dependent epimerase/dehydratase terH (340 aa).

A helical transmembrane segment spans residues 7–27 (IVPPGGLVLVTGVTGFIGSYI). Asparagine 139 carries N-linked (GlcNAc...) asparagine glycosylation. Tyrosine 176 is a binding site for NADP(+).

This sequence belongs to the NAD(P)-dependent epimerase/dehydratase family. Dihydroflavonol-4-reductase subfamily.

It localises to the membrane. NAD-dependent epimerase/dehydratase; part of the gene cluster that mediates the biosynthesis of terrein, a fungal metabolite with ecological, antimicrobial, antiproliferative, and antioxidative activities. The first step in the pathway is performed by the polyketide synthase terA that produces 4-hydroxy-6-methylpyranon (4-HMP), orsellinic acid (OA), and 2,3-dehydro-6-hydroxymellein (2,3-dehydro-6-HM) by condensing acetyl-CoA with two, three, or four malonyl-CoA units, respectively. 4-HMP and OA are not pathway intermediates, but are rather shunt or side products. 2,3-dehydro-6-HM is further converted to 6-hydroxymellein (6-HM) by the 6-hydroxymellein synthase terB. The monooxygenases terC and terD, the multicopper oxidase terE and the Kelch-like protein terF are then involved in the transformation of 6-HM to terrein. Even if they are co-regulated with the other terrein cluster genes, terH and terI seem to be dispensable for terrein production; whereas one or both of the 2 transporters terG and terJ are probably required for efficient secretion of metabolites. The sequence is that of NAD-dependent epimerase/dehydratase terH from Aspergillus terreus (strain NIH 2624 / FGSC A1156).